The chain runs to 773 residues: DNA gyrase subunit B (773 aa).

The region spanning 416-530 is the Toprim domain; the sequence is SEIFLVEGDS…QGHVYIAQAP (115 aa). Mg(2+) is bound by residues glutamate 422, aspartate 495, and aspartate 497.

Belongs to the type II topoisomerase GyrB family. In terms of assembly, heterotetramer, composed of two GyrA and two GyrB chains. In the heterotetramer, GyrA contains the active site tyrosine that forms a transient covalent intermediate with DNA, while GyrB binds cofactors and catalyzes ATP hydrolysis. It depends on Mg(2+) as a cofactor. The cofactor is Mn(2+). Ca(2+) serves as cofactor.

It is found in the cytoplasm. It carries out the reaction ATP-dependent breakage, passage and rejoining of double-stranded DNA.. Its function is as follows. A type II topoisomerase that negatively supercoils closed circular double-stranded (ds) DNA in an ATP-dependent manner to modulate DNA topology and maintain chromosomes in an underwound state. Negative supercoiling favors strand separation, and DNA replication, transcription, recombination and repair, all of which involve strand separation. Also able to catalyze the interconversion of other topological isomers of dsDNA rings, including catenanes and knotted rings. Type II topoisomerases break and join 2 DNA strands simultaneously in an ATP-dependent manner. This is DNA gyrase subunit B from Helicobacter pylori (strain ATCC 700392 / 26695) (Campylobacter pylori).